We begin with the raw amino-acid sequence, 603 residues long: Terpenoid synthase 25 (603 aa).

Mg(2+) is bound by residues Asp-356, Asp-360, Asn-500, Thr-504, and Glu-508. The short motif at 356–360 (DDTCD) is the DDXXD motif element.

The protein belongs to the terpene synthase family. Tpsa subfamily. It depends on Mg(2+) as a cofactor. The cofactor is Mn(2+). In terms of tissue distribution, predominantly expressed in roots but also in flowers.

Its subcellular location is the cytoplasm. It participates in secondary metabolite biosynthesis; terpenoid biosynthesis. Functionally, involved in terpene biosynthesis in roots. Possesses sesquiterpene (C15) synthase activity in vitro. Does not seem to be involved in diterpene (C20) biosynthesis. In Arabidopsis thaliana (Mouse-ear cress), this protein is Terpenoid synthase 25.